The chain runs to 543 residues: MKFLTTGLLATAALAAAQEQHVLQAEDGHGQAPQRDASIFDETLQKFQSSLEDGISHFWSEMKTNFKDYLPLISLPKKHTRRPDSEWDHVVRGADIESVWVQGADGEKRREIDGKLHNYDLRVKAVDPSKLGVDPGVKQYSGYLDDNDADKHLFYWFFESRNDPKNDPVVLWLNGGPGCSSLTGLFLELGPATIDKNLKVVSNPYSWNSNASVIFLDQPVNVGFSYSGSSVSDTVAAGKDVYALLTLFFKQFPEYASQDFHISGESYAGHYIPVFAAEILSHKNTNINLKSALIGNGLTDPLTQYPQYRPMACGEGGYPAVLDQGTCRSMDNSLERCLSLIETCYSSESAWVCVPAAMYCNSAILAPYQQTGMNPYDVRTKCEDMASLCYPQLNAITKWLNQESVMQALGVEVQSYESCNSGINRDFLFHGDWMKPYHRLVPSVLEKIPVLIYAGDADFICNWLGNLAWTDALEWPGHKKFAEAKLEDLKIVNNKDKGKKIGQVKSSGNFTFMRIFGAGHMVPLNQPEASLEFFNRWLGGEWH.

The signal sequence occupies residues 1–17 (MKFLTTGLLATAALAAA). The propeptide occupies 18–124 (QEQHVLQAED…KLHNYDLRVK (107 aa)). Cystine bridges form between C179-C419, C313-C327, C337-C360, C344-C353, and C382-C389. N210 carries an N-linked (GlcNAc...) asparagine glycan. The active site involves S266. D458 is an active-site residue. The N-linked (GlcNAc...) asparagine glycan is linked to N509. H520 is an active-site residue.

The protein belongs to the peptidase S10 family.

Its subcellular location is the vacuole. It carries out the reaction Release of a C-terminal amino acid with broad specificity.. Functionally, vacuolar carboxypeptidase involved in degradation of small peptides. Digests preferentially peptides containing an aliphatic or hydrophobic residue in P1' position, as well as methionine, leucine or phenylalanine in P1 position of ester substrate. The protein is Carboxypeptidase Y homolog A (cpyA) of Trichophyton verrucosum (strain HKI 0517).